Reading from the N-terminus, the 66-residue chain is Large ribosomal subunit protein bL33c (66 aa).

Belongs to the bacterial ribosomal protein bL33 family.

The protein resides in the plastid. It localises to the chloroplast. The chain is Large ribosomal subunit protein bL33c from Populus alba (White poplar).